A 122-amino-acid chain; its full sequence is Large ribosomal subunit protein uL14c (122 aa).

It belongs to the universal ribosomal protein uL14 family. As to quaternary structure, part of the 50S ribosomal subunit.

The protein resides in the plastid. It localises to the chloroplast. Functionally, binds to 23S rRNA. This chain is Large ribosomal subunit protein uL14c, found in Angiopteris evecta (Mule's foot fern).